The sequence spans 326 residues: Ribonuclease H2 subunit A (326 aa).

Residues 1–47 are disordered; that stretch reads MKDDHDAWEPEELVSDNNSSENELQEDQNSSITFLPPSVNKSNPAKS. A compositionally biased stretch (polar residues) spans 15–47; it reads SDNNSSENELQEDQNSSITFLPPSVNKSNPAKS. In terms of domain architecture, RNase H type-2 spans 63–286; sequence PYRLGVDEAG…AKDLLELPSK (224 aa). Residues D69, E70, and D180 each coordinate a divalent metal cation.

It belongs to the RNase HII family. Eukaryotic subfamily. Mn(2+) is required as a cofactor. Requires Mg(2+) as cofactor.

It catalyses the reaction Endonucleolytic cleavage to 5'-phosphomonoester.. Functionally, endonuclease that specifically degrades the RNA of RNA-DNA hybrids. Participates in DNA replication. The chain is Ribonuclease H2 subunit A (rnh201) from Schizosaccharomyces pombe (strain 972 / ATCC 24843) (Fission yeast).